A 64-amino-acid chain; its full sequence is Large ribosomal subunit protein bL35 (64 aa).

Residues 22-31 are compositionally biased toward basic residues; it reads GKVKHGHAYR. Residues 22–64 form a disordered region; that stretch reads GKVKHGHAYRSHLAQSKTTKQKRQSRKSTLMNNSDFKRLKKLI.

Belongs to the bacterial ribosomal protein bL35 family.

In Mesomycoplasma hyopneumoniae (strain 232) (Mycoplasma hyopneumoniae), this protein is Large ribosomal subunit protein bL35.